The chain runs to 349 residues: Protein Wnt-7b (349 aa).

A signal peptide spans 1-24; sequence MHRNFRKWIFYVFLCFGVIYVKLG. 5 disulfide bridges follow: Cys-73-Cys-84, Cys-123-Cys-131, Cys-133-Cys-152, Cys-200-Cys-214, and Cys-202-Cys-209. Residues Asn-83 and Asn-127 are each glycosylated (N-linked (GlcNAc...) asparagine). A lipid anchor (O-palmitoleoyl serine; by PORCN) is attached at Ser-206. Residues 238 to 266 form a disordered linker region; the sequence is VEVVRASRLRQPTFLKIKQIKSYQKPMET. 6 cysteine pairs are disulfide-bonded: Cys-278/Cys-309, Cys-294/Cys-304, Cys-308/Cys-348, Cys-324/Cys-339, Cys-326/Cys-336, and Cys-331/Cys-332. Asn-295 is a glycosylation site (N-linked (GlcNAc...) asparagine).

It belongs to the Wnt family. Post-translationally, palmitoleoylation is required for efficient binding to frizzled receptors. Depalmitoleoylation leads to Wnt signaling pathway inhibition. As to expression, expressed in differentiating lens fiber cells.

It is found in the secreted. The protein localises to the extracellular space. The protein resides in the extracellular matrix. Its function is as follows. Ligand for members of the frizzled family of seven transmembrane receptors that functions in the canonical Wnt/beta-catenin signaling pathway. Required for normal fusion of the chorion and the allantois during placenta development. Required for central nervous system (CNS) angiogenesis and blood-brain barrier regulation. This is Protein Wnt-7b (WNT7B) from Gallus gallus (Chicken).